The sequence spans 91 residues: Acylphosphatase (91 aa).

In terms of domain architecture, Acylphosphatase-like spans 5 to 91; that stretch reads CLHAYVGGRV…QGIAGFIVRR (87 aa). Residues Arg20 and Asn38 contribute to the active site.

This sequence belongs to the acylphosphatase family.

It catalyses the reaction an acyl phosphate + H2O = a carboxylate + phosphate + H(+). The sequence is that of Acylphosphatase (acyP) from Pseudomonas paraeruginosa (strain DSM 24068 / PA7) (Pseudomonas aeruginosa (strain PA7)).